Reading from the N-terminus, the 311-residue chain is Transcription factor bHLH145 (311 aa).

Residues 253 to 302 enclose the bHLH domain; that stretch reads FLKRSKLSSNKIGEEKIFETVSLLRSVVPGEELVDPILVIDRAIDYLKSL.

Homodimer.

The protein resides in the nucleus. In Arabidopsis thaliana (Mouse-ear cress), this protein is Transcription factor bHLH145 (BHLH145).